Consider the following 227-residue polypeptide: 2-C-methyl-D-erythritol 4-phosphate cytidylyltransferase (227 aa).

Belongs to the IspD/TarI cytidylyltransferase family. IspD subfamily.

The enzyme catalyses 2-C-methyl-D-erythritol 4-phosphate + CTP + H(+) = 4-CDP-2-C-methyl-D-erythritol + diphosphate. It functions in the pathway isoprenoid biosynthesis; isopentenyl diphosphate biosynthesis via DXP pathway; isopentenyl diphosphate from 1-deoxy-D-xylulose 5-phosphate: step 2/6. Functionally, catalyzes the formation of 4-diphosphocytidyl-2-C-methyl-D-erythritol from CTP and 2-C-methyl-D-erythritol 4-phosphate (MEP). The protein is 2-C-methyl-D-erythritol 4-phosphate cytidylyltransferase of Lachnospira eligens (strain ATCC 27750 / DSM 3376 / VPI C15-48 / C15-B4) (Eubacterium eligens).